A 261-amino-acid chain; its full sequence is DNA repair protein RecO (261 aa).

The protein belongs to the RecO family.

In terms of biological role, involved in DNA repair and RecF pathway recombination. The sequence is that of DNA repair protein RecO from Limosilactobacillus reuteri (strain DSM 20016) (Lactobacillus reuteri).